A 438-amino-acid chain; its full sequence is UDP-N-acetylmuramoylalanine--D-glutamate ligase (438 aa).

Gly-115–Thr-121 is an ATP binding site.

This sequence belongs to the MurCDEF family.

It localises to the cytoplasm. It catalyses the reaction UDP-N-acetyl-alpha-D-muramoyl-L-alanine + D-glutamate + ATP = UDP-N-acetyl-alpha-D-muramoyl-L-alanyl-D-glutamate + ADP + phosphate + H(+). It functions in the pathway cell wall biogenesis; peptidoglycan biosynthesis. In terms of biological role, cell wall formation. Catalyzes the addition of glutamate to the nucleotide precursor UDP-N-acetylmuramoyl-L-alanine (UMA). In Vibrio atlanticus (strain LGP32) (Vibrio splendidus (strain Mel32)), this protein is UDP-N-acetylmuramoylalanine--D-glutamate ligase.